The following is a 397-amino-acid chain: UDP-GlcNAc:betaGal beta-1,3-N-acetylglucosaminyltransferase 8 (397 aa).

The Cytoplasmic segment spans residues 1 to 6; the sequence is MRCPKC. A helical; Signal-anchor for type II membrane protein membrane pass occupies residues 7-23; it reads LLCLSALLTLLGLKVYI. Topologically, residues 24 to 397 are lumenal; the sequence is EWTSESRLSK…KQLQDPRLQC (374 aa). Residues 33-58 are disordered; that stretch reads KAYPSPRGTPPSPTPANPEPTLPANL. Positions 39–53 are enriched in pro residues; sequence RGTPPSPTPANPEPT. Asparagine 57 carries an N-linked (GlcNAc...) asparagine glycan.

Belongs to the glycosyltransferase 31 family. As to quaternary structure, interacts with B3GNT2; this interaction greatly increases B3GNT2 catalytic activity, independently of B3GNT8 enzymatic activity. As to expression, highly expressed in small intestine, pancreas, spleen, bone marrow, lung, throat, and ileum, and weakly in fetal brain, cerebellum, heart, liver, tongue, breast, uteri, and testis. Not detected in colon. Differentially expressed in human tumor cell lines.

The protein resides in the golgi apparatus membrane. It participates in protein modification; protein glycosylation. Functionally, beta-1,3-N-acetylglucosaminyltransferase that plays a role in the elongation of specific branch structures of multiantennary N-glycans. Has strong activity towards tetraantennary N-glycans and 2,6 triantennary glycans. The sequence is that of UDP-GlcNAc:betaGal beta-1,3-N-acetylglucosaminyltransferase 8 from Homo sapiens (Human).